We begin with the raw amino-acid sequence, 122 residues long: Crustacean hyperglycemic hormones 7 (122 aa).

The N-terminal stretch at 1–26 is a signal peptide; sequence MSLAMTAFRMMAVALVVVVASSTTWA. 3 disulfide bridges follow: Cys-55–Cys-91, Cys-71–Cys-87, and Cys-74–Cys-100. Residue Val-120 is modified to Valine amide.

The protein belongs to the arthropod CHH/MIH/GIH/VIH hormone family. In terms of tissue distribution, produced by the medulla terminalis X-organ in the eyestalks and transported to the sinus gland where they are stored and released.

It localises to the secreted. Its function is as follows. Hormone found in the sinus gland of isopods and decapods which controls the blood sugar level. Has a secretagogue action over the amylase released from the midgut gland. May act as a stress hormone and may be involved in the control of molting and reproduction. The chain is Crustacean hyperglycemic hormones 7 from Penaeus japonicus (Kuruma prawn).